Reading from the N-terminus, the 293-residue chain is Ribosomal protein L11 methyltransferase (293 aa).

S-adenosyl-L-methionine-binding residues include threonine 145, glycine 166, aspartate 188, and asparagine 230.

Belongs to the methyltransferase superfamily. PrmA family.

The protein localises to the cytoplasm. It catalyses the reaction L-lysyl-[protein] + 3 S-adenosyl-L-methionine = N(6),N(6),N(6)-trimethyl-L-lysyl-[protein] + 3 S-adenosyl-L-homocysteine + 3 H(+). Its function is as follows. Methylates ribosomal protein L11. The protein is Ribosomal protein L11 methyltransferase of Escherichia coli (strain 55989 / EAEC).